A 631-amino-acid chain; its full sequence is Phosphomethylpyrimidine synthase (631 aa).

Substrate is bound by residues asparagine 239, methionine 268, tyrosine 297, histidine 333, 353 to 355 (SRG), 394 to 397 (DGLR), and glutamate 433. Histidine 437 provides a ligand contact to Zn(2+). Tyrosine 460 contacts substrate. Histidine 501 serves as a coordination point for Zn(2+). Cysteine 581, cysteine 584, and cysteine 589 together coordinate [4Fe-4S] cluster.

This sequence belongs to the ThiC family. Homodimer. Requires [4Fe-4S] cluster as cofactor.

The enzyme catalyses 5-amino-1-(5-phospho-beta-D-ribosyl)imidazole + S-adenosyl-L-methionine = 4-amino-2-methyl-5-(phosphooxymethyl)pyrimidine + CO + 5'-deoxyadenosine + formate + L-methionine + 3 H(+). The protein operates within cofactor biosynthesis; thiamine diphosphate biosynthesis. Catalyzes the synthesis of the hydroxymethylpyrimidine phosphate (HMP-P) moiety of thiamine from aminoimidazole ribotide (AIR) in a radical S-adenosyl-L-methionine (SAM)-dependent reaction. The protein is Phosphomethylpyrimidine synthase of Ralstonia nicotianae (strain ATCC BAA-1114 / GMI1000) (Ralstonia solanacearum).